Consider the following 117-residue polypeptide: Large ribosomal subunit protein uL24 (117 aa).

It belongs to the universal ribosomal protein uL24 family. In terms of assembly, part of the 50S ribosomal subunit.

Its function is as follows. One of two assembly initiator proteins, it binds directly to the 5'-end of the 23S rRNA, where it nucleates assembly of the 50S subunit. One of the proteins that surrounds the polypeptide exit tunnel on the outside of the subunit. This chain is Large ribosomal subunit protein uL24, found in Nostoc punctiforme (strain ATCC 29133 / PCC 73102).